The sequence spans 300 residues: Geranylgeranyl pyrophosphate synthase (300 aa).

Met1 bears the N-acetylmethionine mark. Isopentenyl diphosphate-binding residues include Lys25, Arg28, and His57. Mg(2+) contacts are provided by Asp64 and Asp68. Arg73 serves as a coordination point for dimethylallyl diphosphate. An isopentenyl diphosphate-binding site is contributed by Arg74. Positions 151, 152, 185, 202, and 212 each coordinate dimethylallyl diphosphate.

The protein belongs to the FPP/GGPP synthase family. In terms of assembly, homohexamer; trimer of homodimers. It depends on Mg(2+) as a cofactor.

The protein resides in the cytoplasm. The protein localises to the perinuclear region. Its subcellular location is the myofibril. It localises to the sarcomere. It is found in the z line. The enzyme catalyses isopentenyl diphosphate + dimethylallyl diphosphate = (2E)-geranyl diphosphate + diphosphate. It catalyses the reaction isopentenyl diphosphate + (2E)-geranyl diphosphate = (2E,6E)-farnesyl diphosphate + diphosphate. It carries out the reaction isopentenyl diphosphate + (2E,6E)-farnesyl diphosphate = (2E,6E,10E)-geranylgeranyl diphosphate + diphosphate. It functions in the pathway isoprenoid biosynthesis; farnesyl diphosphate biosynthesis; farnesyl diphosphate from geranyl diphosphate and isopentenyl diphosphate: step 1/1. Its pathway is isoprenoid biosynthesis; geranyl diphosphate biosynthesis; geranyl diphosphate from dimethylallyl diphosphate and isopentenyl diphosphate: step 1/1. It participates in isoprenoid biosynthesis; geranylgeranyl diphosphate biosynthesis; geranylgeranyl diphosphate from farnesyl diphosphate and isopentenyl diphosphate: step 1/1. Catalyzes the trans-addition of the three molecules of IPP onto DMAPP to form geranylgeranyl pyrophosphate, an important precursor of carotenoids and geranylated proteins. The protein is Geranylgeranyl pyrophosphate synthase (Ggps1) of Rattus norvegicus (Rat).